The primary structure comprises 330 residues: Intraflagellar transport protein 46 homolog (330 aa).

Disordered regions lie at residues 1-21 (MDRPYDETVDIPDSEDIATPR) and 55-112 (SIKT…EGVY). The segment covering 7–16 (ETVDIPDSED) has biased composition (acidic residues). The span at 68-79 (SSSEKLCDRGSS) shows a compositional bias: basic and acidic residues. Residues 80 to 101 (DDDDDDDNDDDEDEDDDDDDEN) show a composition bias toward acidic residues.

The protein belongs to the IFT46 family.

It is found in the cytoplasm. It localises to the cytoskeleton. The protein localises to the cilium basal body. The protein resides in the cell projection. Its subcellular location is the cilium. In terms of biological role, forms part of a complex involved in intraflagellar transport (IFT), the bi-directional movement of particles required for the assembly, maintenance and functioning of primary cilia. The sequence is that of Intraflagellar transport protein 46 homolog from Schistosoma japonicum (Blood fluke).